The following is a 328-amino-acid chain: DNA repair and recombination protein RadA (328 aa).

Position 118 to 125 (118 to 125) interacts with ATP; sequence GEYGSGKT.

This sequence belongs to the eukaryotic RecA-like protein family.

Functionally, involved in DNA repair and in homologous recombination. Binds and assemble on single-stranded DNA to form a nucleoprotein filament. Hydrolyzes ATP in a ssDNA-dependent manner and promotes DNA strand exchange between homologous DNA molecules. The polypeptide is DNA repair and recombination protein RadA (Desulfurococcus amylolyticus (strain DSM 18924 / JCM 16383 / VKM B-2413 / 1221n) (Desulfurococcus kamchatkensis)).